We begin with the raw amino-acid sequence, 1020 residues long: UPF0182 protein jk1603 (1020 aa).

Residues 1–18 (MSTPTPPSSGRPKQPFPS) are compositionally biased toward pro residues. Residues 1-23 (MSTPTPPSSGRPKQPFPSSPGSS) form a disordered region. 7 helical membrane-spanning segments follow: residues 28-48 (ILGI…VVVS), 73-93 (LVLF…AAFL), 125-145 (FLVG…QSNW), 175-195 (LPFL…AFVI), 227-247 (LAVI…FDRY), 272-292 (QIVL…TIVL), and 300-320 (LAVA…PAML). Residues 924 to 998 (QEIDGSVVDP…KVNKTRESGT (75 aa)) are disordered. Basic and acidic residues-rich tracts occupy residues 942 to 961 (KGDK…EQSS) and 969 to 998 (KSDD…ESGT).

This sequence belongs to the UPF0182 family.

It localises to the cell membrane. The chain is UPF0182 protein jk1603 from Corynebacterium jeikeium (strain K411).